Reading from the N-terminus, the 127-residue chain is Small ribosomal subunit protein uS13 (127 aa).

A disordered region spans residues 90 to 127 (KRHREGLPVNGQRTRTNARTRKGKRKTVAGRSQSTQKK). The segment covering 105 to 117 (TNARTRKGKRKTV) has biased composition (basic residues).

This sequence belongs to the universal ribosomal protein uS13 family. Part of the 30S ribosomal subunit. Forms a loose heterodimer with protein S19. Forms two bridges to the 50S subunit in the 70S ribosome.

Located at the top of the head of the 30S subunit, it contacts several helices of the 16S rRNA. In the 70S ribosome it contacts the 23S rRNA (bridge B1a) and protein L5 of the 50S subunit (bridge B1b), connecting the 2 subunits; these bridges are implicated in subunit movement. Contacts the tRNAs in the A and P-sites. The chain is Small ribosomal subunit protein uS13 from Salinibacter ruber (strain DSM 13855 / M31).